The sequence spans 467 residues: Glycogen synthase kinase-3 (467 aa).

The segment covering 1–20 (MSSKDQILEKDKKETDDNGN) has biased composition (basic and acidic residues). The tract at residues 1 to 42 (MSSKDQILEKDKKETDDNGNKKTTTTTSSSSSSSSSSKPRSN) is disordered. Residues 23 to 37 (TTTTTSSSSSSSSSS) are compositionally biased toward low complexity. In terms of domain architecture, Protein kinase spans 56–339 (YITEGVIGNG…PVEICAHPFF (284 aa)). ATP-binding positions include 62–70 (IGNGSFGVV) and Lys-85. Asp-179 acts as the Proton acceptor in catalysis. A phosphotyrosine; by zakA mark is found at Tyr-214 and Tyr-220. The tract at residues 400–467 (SSNQSSSSNS…TTTTTTTSNH (68 aa)) is disordered.

This sequence belongs to the protein kinase superfamily. CMGC Ser/Thr protein kinase family. GSK-3 subfamily. Mg(2+) serves as cofactor.

It carries out the reaction L-seryl-[tau protein] + ATP = O-phospho-L-seryl-[tau protein] + ADP + H(+). It catalyses the reaction L-threonyl-[tau protein] + ATP = O-phospho-L-threonyl-[tau protein] + ADP + H(+). Inhibited by lithium. Lithium inhibition is competitive with respect to magnesium but non-competitive with respect to the peptide substrate. Its function is as follows. During cellular differentiation, may mediate an extracellular cyclic AMP stimulated signal transduction pathway that regulates prespore and prestalk B-cell proportions through inhibition of stalk cell formation and induction of prespore cell differentiation. The cAMP receptor carC appears to activate gskA via the tyrosine kinases zakA and zak2, to stimulate prespore differentiation, while carD appears to negatively regulate gskA, to promote prestalk formation. This is Glycogen synthase kinase-3 (gskA) from Dictyostelium discoideum (Social amoeba).